We begin with the raw amino-acid sequence, 219 residues long: Nodulation protein NolA (219 aa).

The region spanning arginine 10–glycine 79 is the HTH merR-type domain. The H-T-H motif DNA-binding region spans isoleucine 13–histidine 32.

Involved in genotype-specific nodulation of soybeans. This chain is Nodulation protein NolA (nolA), found in Bradyrhizobium elkanii.